The primary structure comprises 101 residues: NAD(P)H-quinone oxidoreductase subunit 4L, chloroplastic (101 aa).

3 consecutive transmembrane segments (helical) span residues 2–22, 32–52, and 61–81; these read MFERVLFLSVYLFSIGIYGLI, ICLELILNSINLNLVTFSDLF, and IFAIFVIALAAAEAAIGLSIL.

The protein belongs to the complex I subunit 4L family. As to quaternary structure, NDH is composed of at least 16 different subunits, 5 of which are encoded in the nucleus.

The protein localises to the plastid. It localises to the chloroplast thylakoid membrane. The enzyme catalyses a plastoquinone + NADH + (n+1) H(+)(in) = a plastoquinol + NAD(+) + n H(+)(out). It catalyses the reaction a plastoquinone + NADPH + (n+1) H(+)(in) = a plastoquinol + NADP(+) + n H(+)(out). NDH shuttles electrons from NAD(P)H:plastoquinone, via FMN and iron-sulfur (Fe-S) centers, to quinones in the photosynthetic chain and possibly in a chloroplast respiratory chain. The immediate electron acceptor for the enzyme in this species is believed to be plastoquinone. Couples the redox reaction to proton translocation, and thus conserves the redox energy in a proton gradient. In Zea mays (Maize), this protein is NAD(P)H-quinone oxidoreductase subunit 4L, chloroplastic.